Reading from the N-terminus, the 251-residue chain is Phosphoribosylaminoimidazole-succinocarboxamide synthase (251 aa).

This sequence belongs to the SAICAR synthetase family.

The catalysed reaction is 5-amino-1-(5-phospho-D-ribosyl)imidazole-4-carboxylate + L-aspartate + ATP = (2S)-2-[5-amino-1-(5-phospho-beta-D-ribosyl)imidazole-4-carboxamido]succinate + ADP + phosphate + 2 H(+). It functions in the pathway purine metabolism; IMP biosynthesis via de novo pathway; 5-amino-1-(5-phospho-D-ribosyl)imidazole-4-carboxamide from 5-amino-1-(5-phospho-D-ribosyl)imidazole-4-carboxylate: step 1/2. In Ruegeria pomeroyi (strain ATCC 700808 / DSM 15171 / DSS-3) (Silicibacter pomeroyi), this protein is Phosphoribosylaminoimidazole-succinocarboxamide synthase.